The chain runs to 349 residues: MVAVRRRRTQASNPRSEPPQHMSDHDSDSDWDTVCEECSSGKQPAKLLLCDKCDKGFHLFCLRPILVSVPKGSWFCPSCSKHQIPKSFPLIQTKIIDFFRIKRSPDSSQISSSSDSIGKKRKKTSLVMSKKKRRLLPYNPSNDPQRRLEQMASLATALRASNTKFSNELTYVSGKAPRSANQAAFEKGGMQVLSKEGVETLALCKKMMDLGECPPLMVVFDPYEGFTVEADRFIKDWTIITEYVGDVDYLSNREDDYDGDSMMTLLHASDPSQCLVICPDRRSNIARFISGINNHSPEGRKKQNLKCVRFNINGEARVLLVANRDISKGERLYYDYNGYEHEYPTEHFV.

Residues 1–28 (MVAVRRRRTQASNPRSEPPQHMSDHDSD) are disordered. A PHD-type zinc finger spans residues 32–82 (DTVCEECSSGKQPAKLLLCDKCDKGFHLFCLRPILVSVPKGSWFCPSCSKH). The short motif at 92-99 (QTKIIDFF) is the PIP motif element. The disordered stretch occupies residues 105–126 (PDSSQISSSSDSIGKKRKKTSL). The span at 106 to 116 (DSSQISSSSDS) shows a compositional bias: low complexity. Residue M190 participates in substrate binding. Positions 214–337 (PPLMVVFDPY…KGERLYYDYN (124 aa)) constitute an SET domain. Residues 224–226 (EGF) and 287–291 (RFISG) each bind S-adenosyl-L-methionine. Substrate is bound by residues R309 and 339-340 (YE). S-adenosyl-L-methionine contacts are provided by Y343 and V349.

It belongs to the class V-like SAM-binding methyltransferase superfamily. Histone-lysine methyltransferase family. TRX/MLL subfamily. Interacts with PCNA1 and PCNA2. Interacts (via PHD domain) with HTR1 (via N-terminus). Interacts with IPS1. In terms of tissue distribution, expressed in leaves, roots, stems, flowers and siliques. Up-regulated in tissues where cell division is active.

It is found in the nucleus. The catalysed reaction is L-lysyl(27)-[histone H3] + S-adenosyl-L-methionine = N(6)-methyl-L-lysyl(27)-[histone H3] + S-adenosyl-L-homocysteine + H(+). Functionally, histone methyltransferase that specifically monomethylates 'Lys-27' of histone H3 (H3K27me1). Has higher activity on nucleosomes containing H3.1 than H3.3. Involved in the formation of constitutive heterochromatin and the silencing of heterochromatic elements. May act as a positive regulator of the G1-S transition. Influences which sets of rRNA gene variants are expressed or silenced. Up-regulated by E2FB. This is Histone-lysine N-methyltransferase ATXR6 (ATXR6) from Arabidopsis thaliana (Mouse-ear cress).